An 87-amino-acid polypeptide reads, in one-letter code: Large ribosomal subunit protein bL28 (87 aa).

It belongs to the bacterial ribosomal protein bL28 family.

In Methylacidiphilum infernorum (isolate V4) (Methylokorus infernorum (strain V4)), this protein is Large ribosomal subunit protein bL28.